Consider the following 816-residue polypeptide: H(+)/Cl(-) exchange transporter 5 (816 aa).

Residues 1–124 (MAMWQGAMDN…WALIHSVSDA (124 aa)) lie on the Cytoplasmic side of the membrane. 2 helical membrane passes run 125-162 (FSGW…ICTG) and 208-231 (VNYF…VKAF). The short motif at 237–241 (GSGIP) is the Selectivity filter part_1 element. Ser238 contacts chloride. An intramembrane region (helical) is located at residues 240–247 (IPEIKTIL). Transmembrane regions (helical) follow at residues 256-275 (LGKW…VSSG) and 281-300 (EGPL…HCFN). Residues 279–283 (GKEGP) carry the Selectivity filter part_2 motif. Intramembrane regions (helical) lie at residues 312-324 (VLSA…VSVA) and 328-336 (PIGGVLFSL). Transmembrane regions (helical) follow at residues 348-366 (LWRS…RSIN), 389-414 (LVPF…IAWC), 422-442 (LGKY…ILAF), 498-518 (MWQL…TFGM), and 523-542 (GLFI…LGVG). The Selectivity filter part_3 signature appears at 523-527 (GLFIP). Phe525 is a binding site for chloride. Residues 570-584 (GLYAMVGAAACLGGV) constitute an intramembrane region (helical). The note=Loop between two helices intramembrane region spans 585-587 (TRM). The helical intramembrane region spans 588–599 (TVSLVVIMFELT). The segment at residues 600–604 (GGLEY) is an intramembrane region (note=Loop between two helices). A helical membrane pass occupies residues 605–622 (IVPLMAAAMTSKWVADAL). The Cytoplasmic segment spans residues 623-816 (GREGIYDAHI…NQDPDSILFN (194 aa)). Tyr628 is a binding site for chloride. CBS domains lie at 656-720 (MKPR…ARKK) and 752-812 (ILDL…DPDS). Residues Thr666, 687–689 (YSG), and 794–797 (TKKD) each bind ATP.

Belongs to the chloride channel (TC 2.A.49) family. ClC-5/CLCN5 subfamily. Interacts with NEDD4 and NEDD4L. In terms of processing, ubiquitinated by NEDD4L in the presence of albumin; which promotes endocytosis and proteasomal degradation. In terms of tissue distribution, kidney specific.

The protein localises to the golgi apparatus membrane. It localises to the endosome membrane. It is found in the cell membrane. The enzyme catalyses 2 chloride(in) + H(+)(out) = 2 chloride(out) + H(+)(in). Its function is as follows. Proton-coupled chloride transporter. Functions as antiport system and exchanges chloride ions against protons. Important for normal acidification of the endosome lumen. May play an important role in renal tubular function. The CLC channel family contains both chloride channels and proton-coupled anion transporters that exchange chloride or another anion for protons. The absence of conserved gating glutamate residues is typical for family members that function as channels. In Mus musculus (Mouse), this protein is H(+)/Cl(-) exchange transporter 5 (Clcn5).